A 422-amino-acid polypeptide reads, in one-letter code: Zinc finger and BTB domain-containing protein 42 (422 aa).

The 69-residue stretch at 24 to 92 folds into the BTB domain; it reads CDCTVLVGDA…MYEGRLDLRS (69 aa). 3 disordered regions span residues 121–141, 166–188, and 207–256; these read KDRSLDPGNPAPGAEPAQPPC, AALPPRASGPPPCQVPEESDQAL, and LQTP…AAKG. The span at 243–252 shows a compositional bias: pro residues; that stretch reads HSPPKPPPVP. C2H2-type zinc fingers lie at residues 294 to 316, 334 to 356, 362 to 384, and 390 to 413; these read CICPLCSKLFPSSHVLQLHLSAH, PTCPLCGKTFSCTYTLKRHERTH, YTCVQCGKSFQYSHNLSRHTVVH, and HACRWCERRFTQSGDLYRHVRKFH.

This sequence belongs to the krueppel C2H2-type zinc-finger protein family. ZBTB18 subfamily. In terms of tissue distribution, expressed in skeletal muscle (at protein level).

The protein localises to the cytoplasm. The protein resides in the nucleus. It localises to the nucleoplasm. In terms of biological role, transcriptional repressor. Specifically binds DNA and probably acts by recruiting chromatin remodeling multiprotein complexes. This chain is Zinc finger and BTB domain-containing protein 42 (ZBTB42), found in Homo sapiens (Human).